Consider the following 135-residue polypeptide: Meiotically up-regulated gene 116 protein (135 aa).

A helical transmembrane segment spans residues 20–39 (YFHSFHCFFLLCFTVMLCVV). A disordered region spans residues 81 to 101 (QTPTKKGNKTKKKRKKEKKKE). Over residues 86 to 98 (KGNKTKKKRKKEK) the composition is skewed to basic residues.

The protein resides in the mitochondrion membrane. Has a role in meiosis. The chain is Meiotically up-regulated gene 116 protein (mug116) from Schizosaccharomyces pombe (strain 972 / ATCC 24843) (Fission yeast).